A 140-amino-acid chain; its full sequence is uncharacterized protein (140 aa).

Residues 80–115 (KNGTRRHALPSPLEGSFQPGRQIPPPQTPSTDPQTL) are disordered.

This is an uncharacterized protein from Homo sapiens (Human).